Consider the following 338-residue polypeptide: Lipoate-protein ligase A (338 aa).

Residues 29–216 (SPNQRVLFLW…AFFAYYDEQV (188 aa)) enclose the BPL/LPL catalytic domain. ATP contacts are provided by residues arginine 71, 76–79 (GAVF), and lysine 134. Residue lysine 134 participates in (R)-lipoate binding.

The protein belongs to the LplA family. As to quaternary structure, monomer.

It localises to the cytoplasm. It catalyses the reaction L-lysyl-[lipoyl-carrier protein] + (R)-lipoate + ATP = N(6)-[(R)-lipoyl]-L-lysyl-[lipoyl-carrier protein] + AMP + diphosphate + H(+). It functions in the pathway protein modification; protein lipoylation via exogenous pathway; protein N(6)-(lipoyl)lysine from lipoate: step 1/2. The protein operates within protein modification; protein lipoylation via exogenous pathway; protein N(6)-(lipoyl)lysine from lipoate: step 2/2. Functionally, catalyzes both the ATP-dependent activation of exogenously supplied lipoate to lipoyl-AMP and the transfer of the activated lipoyl onto the lipoyl domains of lipoate-dependent enzymes. The sequence is that of Lipoate-protein ligase A from Yersinia pseudotuberculosis serotype O:1b (strain IP 31758).